A 136-amino-acid polypeptide reads, in one-letter code: Small ribosomal subunit protein uS9 (136 aa).

The interval 97–136 (SPDNRKPLKTEGHLSRDPRAKERRKYGLKKARKAPQFSKR) is disordered. Residues 98 to 116 (PDNRKPLKTEGHLSRDPRA) are compositionally biased toward basic and acidic residues. The segment covering 117 to 136 (KERRKYGLKKARKAPQFSKR) has biased composition (basic residues).

Belongs to the universal ribosomal protein uS9 family.

The polypeptide is Small ribosomal subunit protein uS9 (Prochlorococcus marinus (strain MIT 9312)).